We begin with the raw amino-acid sequence, 48 residues long: Protein YgdT (48 aa).

This Escherichia coli (strain K12) protein is Protein YgdT (ygdT).